Consider the following 98-residue polypeptide: Large ribosomal subunit protein eL21 (98 aa).

The interval 1 to 22 (MVQMSEGFRRKTRKKLSKHPRE) is disordered. The span at 10–21 (RKTRKKLSKHPR) shows a compositional bias: basic residues.

Belongs to the eukaryotic ribosomal protein eL21 family.

This is Large ribosomal subunit protein eL21 (rpl21e) from Methanocaldococcus jannaschii (strain ATCC 43067 / DSM 2661 / JAL-1 / JCM 10045 / NBRC 100440) (Methanococcus jannaschii).